Consider the following 394-residue polypeptide: 2-aminobenzenesulfonate 2,3-dioxygenase subunit alpha (394 aa).

Positions 43–154 constitute a Rieske domain; the sequence is WKFVCHVSEI…TETYLGLVFV (112 aa). 4 residues coordinate [2Fe-2S] cluster: Cys-85, His-87, Cys-105, and His-108. 2 residues coordinate Fe cation: His-209 and His-213.

The protein belongs to the bacterial ring-hydroxylating dioxygenase alpha subunit family. As to quaternary structure, heterotetramer with a alpha2beta2 structure. The cofactor is [2Fe-2S] cluster. Requires Fe cation as cofactor.

It catalyses the reaction 2-aminobenzenesulfonate + NADH + O2 + 2 H(+) = 2,3-dihydroxybenzenesulfonate + NH4(+) + NAD(+). With respect to regulation, inhibited by o-phenanthroline. Functionally, alpha subunit of the oxygenase component of the 2-aminobenzenesulfonate 2,3-dioxygenase system (deaminating) (ABSDOS). Can use 2-aminobenzenesulfonate (ABS), benzenesulfonate (BS), 4-toluenesulfonate (TS), 2-nitrobenzenesulfonate, 3- and 4-aminobenzenesulfonates, 4-chloro- and 4-hydroxybenzenesulfonates and pyridine-3-sulfonate as substrates. No desulfonation of ABS to aminocatechol or aminophenol detected. The chain is 2-aminobenzenesulfonate 2,3-dioxygenase subunit alpha from Alcaligenes sp.